A 273-amino-acid polypeptide reads, in one-letter code: Dermonecrotic toxin LapSicTox-alphaIB2 (273 aa).

His5 is a catalytic residue. Glu25 and Asp27 together coordinate Mg(2+). Catalysis depends on His41, which acts as the Nucleophile. 2 disulfide bridges follow: Cys45-Cys51 and Cys47-Cys190. Asp85 serves as a coordination point for Mg(2+). An N-linked (GlcNAc...) asparagine glycan is attached at Asn250.

Belongs to the arthropod phospholipase D family. Class II subfamily. Mg(2+) is required as a cofactor. As to expression, expressed by the venom gland.

It localises to the secreted. The catalysed reaction is an N-(acyl)-sphingosylphosphocholine = an N-(acyl)-sphingosyl-1,3-cyclic phosphate + choline. The enzyme catalyses an N-(acyl)-sphingosylphosphoethanolamine = an N-(acyl)-sphingosyl-1,3-cyclic phosphate + ethanolamine. It carries out the reaction a 1-acyl-sn-glycero-3-phosphocholine = a 1-acyl-sn-glycero-2,3-cyclic phosphate + choline. It catalyses the reaction a 1-acyl-sn-glycero-3-phosphoethanolamine = a 1-acyl-sn-glycero-2,3-cyclic phosphate + ethanolamine. In terms of biological role, dermonecrotic toxins cleave the phosphodiester linkage between the phosphate and headgroup of certain phospholipids (sphingolipid and lysolipid substrates), forming an alcohol (often choline) and a cyclic phosphate. This toxin acts on sphingomyelin (SM). It may also act on ceramide phosphoethanolamine (CPE), lysophosphatidylcholine (LPC) and lysophosphatidylethanolamine (LPE), but not on lysophosphatidylserine (LPS), and lysophosphatidylglycerol (LPG). It acts by transphosphatidylation, releasing exclusively cyclic phosphate products as second products. Induces dermonecrosis, hemolysis, increased vascular permeability, edema, inflammatory response, and platelet aggregation. This Loxosceles apachea (Apache recluse spider) protein is Dermonecrotic toxin LapSicTox-alphaIB2.